Reading from the N-terminus, the 759-residue chain is Protein AKNAD1 (759 aa).

Positions T169–R246 are disordered. Residues S181–E192 are compositionally biased toward polar residues. Positions Q371–S482 form a coiled coil. The segment covering Y484–V496 has biased composition (polar residues). 4 disordered regions span residues Y484–P543, E634–D654, C678–A723, and P735–Q759. Residues T497 to S509 are compositionally biased toward low complexity. Over residues S639 to D654 the composition is skewed to polar residues. The segment covering R679–Y688 has biased composition (basic and acidic residues). A compositionally biased stretch (polar residues) spans P735–P744.

Belongs to the AKNA family.

The sequence is that of Protein AKNAD1 (AKNAD1) from Macaca fascicularis (Crab-eating macaque).